The following is a 388-amino-acid chain: Succinate--CoA ligase [ADP-forming] subunit beta (388 aa).

The 236-residue stretch at 9–244 (KQLFAQYGLP…PAQNDAREAH (236 aa)) folds into the ATP-grasp domain. Residues Lys46, 53–55 (GRG), Glu99, Thr102, and Glu107 each bind ATP. Positions 199 and 213 each coordinate Mg(2+). Substrate-binding positions include Asn264 and 321–323 (GIV).

The protein belongs to the succinate/malate CoA ligase beta subunit family. Heterotetramer of two alpha and two beta subunits. Mg(2+) serves as cofactor.

It catalyses the reaction succinate + ATP + CoA = succinyl-CoA + ADP + phosphate. It carries out the reaction GTP + succinate + CoA = succinyl-CoA + GDP + phosphate. It participates in carbohydrate metabolism; tricarboxylic acid cycle; succinate from succinyl-CoA (ligase route): step 1/1. In terms of biological role, succinyl-CoA synthetase functions in the citric acid cycle (TCA), coupling the hydrolysis of succinyl-CoA to the synthesis of either ATP or GTP and thus represents the only step of substrate-level phosphorylation in the TCA. The beta subunit provides nucleotide specificity of the enzyme and binds the substrate succinate, while the binding sites for coenzyme A and phosphate are found in the alpha subunit. The sequence is that of Succinate--CoA ligase [ADP-forming] subunit beta from Edwardsiella ictaluri (strain 93-146).